The sequence spans 465 residues: Cysteine--tRNA ligase (465 aa).

Position 27 (Cys-27) interacts with Zn(2+). Residues 29 to 39 carry the 'HIGH' region motif; that stretch reads PTVYNFFHIGN. Cys-207, His-232, and Glu-236 together coordinate Zn(2+). The 'KMSKS' region signature appears at 264–268; it reads KMSKS. Position 267 (Lys-267) interacts with ATP.

Belongs to the class-I aminoacyl-tRNA synthetase family. In terms of assembly, monomer. The cofactor is Zn(2+).

It localises to the cytoplasm. The enzyme catalyses tRNA(Cys) + L-cysteine + ATP = L-cysteinyl-tRNA(Cys) + AMP + diphosphate. The polypeptide is Cysteine--tRNA ligase (Clostridium botulinum (strain Kyoto / Type A2)).